The following is a 121-amino-acid chain: Small ribosomal subunit protein uS13 (121 aa).

The segment at 97–121 (VRGQRTRTNARTRRGARKTVAGKKK) is disordered. The segment covering 100-121 (QRTRTNARTRRGARKTVAGKKK) has biased composition (basic residues).

The protein belongs to the universal ribosomal protein uS13 family. Part of the 30S ribosomal subunit. Forms a loose heterodimer with protein S19. Forms two bridges to the 50S subunit in the 70S ribosome.

Its function is as follows. Located at the top of the head of the 30S subunit, it contacts several helices of the 16S rRNA. In the 70S ribosome it contacts the 23S rRNA (bridge B1a) and protein L5 of the 50S subunit (bridge B1b), connecting the 2 subunits; these bridges are implicated in subunit movement. Contacts the tRNAs in the A and P-sites. This is Small ribosomal subunit protein uS13 from Prochlorococcus marinus (strain MIT 9313).